We begin with the raw amino-acid sequence, 177 residues long: Isopentenyl-diphosphate Delta-isomerase 1 (177 aa).

Residues His24 and His30 each contribute to the Mn(2+) site. In terms of domain architecture, Nudix hydrolase spans 28-160 (SLHRAISIFI…PHAYSFWLEA (133 aa)). Residue Cys65 is part of the active site. A Mg(2+)-binding site is contributed by Cys65. His67 is a Mn(2+) binding site. Residue Glu85 participates in Mg(2+) binding. Positions 110 and 112 each coordinate Mn(2+). Glu112 is an active-site residue.

It belongs to the IPP isomerase type 1 family. It depends on Mg(2+) as a cofactor. The cofactor is Mn(2+).

Its subcellular location is the cytoplasm. The catalysed reaction is isopentenyl diphosphate = dimethylallyl diphosphate. It functions in the pathway isoprenoid biosynthesis; dimethylallyl diphosphate biosynthesis; dimethylallyl diphosphate from isopentenyl diphosphate: step 1/1. In terms of biological role, catalyzes the 1,3-allylic rearrangement of the homoallylic substrate isopentenyl (IPP) to its highly electrophilic allylic isomer, dimethylallyl diphosphate (DMAPP). The polypeptide is Isopentenyl-diphosphate Delta-isomerase 1 (Aromatoleum aromaticum (strain DSM 19018 / LMG 30748 / EbN1) (Azoarcus sp. (strain EbN1))).